The following is a 599-amino-acid chain: UvrABC system protein C (599 aa).

Residues 18-96 (QLPGVYRMLG…IKQHRPPYNI (79 aa)) enclose the GIY-YIG domain. The 36-residue stretch at 207–242 (KELNQELIAKMEEAAEQLAFEKAMFYRDRLGLLREV) folds into the UVR domain.

It belongs to the UvrC family. As to quaternary structure, interacts with UvrB in an incision complex.

It localises to the cytoplasm. The UvrABC repair system catalyzes the recognition and processing of DNA lesions. UvrC both incises the 5' and 3' sides of the lesion. The N-terminal half is responsible for the 3' incision and the C-terminal half is responsible for the 5' incision. The sequence is that of UvrABC system protein C from Acinetobacter baylyi (strain ATCC 33305 / BD413 / ADP1).